We begin with the raw amino-acid sequence, 624 residues long: Bifunctional 3'-phosphoadenosine 5'-phosphosulfate synthase 1 (624 aa).

Methionine 1 carries the N-acetylmethionine modification. An adenylyl-sulfate kinase region spans residues 1 to 225; that stretch reads MELPGSLCKK…VVELLQERDI (225 aa). At lysine 12 the chain carries N6-acetyllysine. Position 62–67 (62–67) interacts with ATP; sequence GAGKTT. Adenosine 5'-phosphosulfate is bound by residues 89–92, phenylalanine 101, 106–109, 132–133, lysine 171, and 184–185; these read DNIR, REEN, IS, and GF. Residues cysteine 207, cysteine 212, 419 to 422, 521 to 525, and alanine 563 each bind ATP; these read QLRN and GRDPA. Positions 234-624 are sulfate adenylyltransferase; sequence VKELYVPENK…AEYYKALEKA (391 aa).

In the N-terminal section; belongs to the APS kinase family. It in the C-terminal section; belongs to the sulfate adenylyltransferase family. In terms of assembly, homodimer.

It carries out the reaction sulfate + ATP + H(+) = adenosine 5'-phosphosulfate + diphosphate. It catalyses the reaction adenosine 5'-phosphosulfate + ATP = 3'-phosphoadenylyl sulfate + ADP + H(+). It functions in the pathway sulfur metabolism; sulfate assimilation. Functionally, bifunctional enzyme with both ATP sulfurylase and APS kinase activity, which mediates two steps in the sulfate activation pathway. The first step is the transfer of a sulfate group to ATP to yield adenosine 5'-phosphosulfate (APS), and the second step is the transfer of a phosphate group from ATP to APS yielding 3'-phosphoadenylylsulfate (PAPS: activated sulfate donor used by sulfotransferase). In mammals, PAPS is the sole source of sulfate; APS appears to be only an intermediate in the sulfate-activation pathway. Required for normal biosynthesis of sulfated L-selectin ligands in endothelial cells. The sequence is that of Bifunctional 3'-phosphoadenosine 5'-phosphosulfate synthase 1 (PAPSS1) from Cavia porcellus (Guinea pig).